The following is a 462-amino-acid chain: Juvenile hormone epoxide hydrolase (462 aa).

The helical transmembrane segment at Ile4–Leu24 threads the bilayer. Residue Asp227 is the Nucleophile of the active site. Tyr372 serves as the catalytic Proton donor. His428 functions as the Proton acceptor in the catalytic mechanism.

This sequence belongs to the peptidase S33 family.

The protein localises to the microsome membrane. It localises to the endoplasmic reticulum membrane. The enzyme catalyses cis-stilbene oxide + H2O = (1R,2R)-hydrobenzoin. It carries out the reaction 1-(4-methoxyphenyl)-N-methyl-N-[(3-methyloxetan-3-yl)methyl]methanamine + H2O = 2-{[(4-methoxybenzyl)(methyl)amino]methyl}-2-methylpropane-1,3-diol. Catalyzes juvenile hormone hydrolysis. The polypeptide is Juvenile hormone epoxide hydrolase (Manduca sexta (Tobacco hawkmoth)).